The chain runs to 132 residues: Large ribosomal subunit protein bL12 (132 aa).

Over residues 100–126 the composition is skewed to basic and acidic residues; it reads ESTPKPVKEGASKEDAEAAKKELEEAG. Positions 100–132 are disordered; the sequence is ESTPKPVKEGASKEDAEAAKKELEEAGAKVSIK.

The protein belongs to the bacterial ribosomal protein bL12 family. Homodimer. Part of the ribosomal stalk of the 50S ribosomal subunit. Forms a multimeric L10(L12)X complex, where L10 forms an elongated spine to which 2 to 4 L12 dimers bind in a sequential fashion. Binds GTP-bound translation factors.

Forms part of the ribosomal stalk which helps the ribosome interact with GTP-bound translation factors. Is thus essential for accurate translation. In Thermosynechococcus vestitus (strain NIES-2133 / IAM M-273 / BP-1), this protein is Large ribosomal subunit protein bL12.